A 465-amino-acid polypeptide reads, in one-letter code: Opioid growth factor receptor-like protein 1 (465 aa).

Disordered regions lie at residues 1 to 89 (MGNL…GNAK) and 309 to 465 (ENFI…TSSG). 4 stretches are compositionally biased toward basic and acidic residues: residues 48 to 59 (REQPEQPPERAG), 316 to 325 (PKKEQPERSK), 363 to 396 (TVEE…RNSE), and 426 to 440 (SEKD…KDSE). Residues 442 to 465 (PENTSCHAEVVSQQNVTNPQTSSG) show a composition bias toward polar residues.

The protein belongs to the opioid growth factor receptor family.

This chain is Opioid growth factor receptor-like protein 1 (Ogfrl1), found in Rattus norvegicus (Rat).